A 151-amino-acid polypeptide reads, in one-letter code: MD-2-related lipid-recognition protein (151 aa).

The N-terminal stretch at 1-18 (MAALHWLLLAALLGCTLA) is a signal peptide. Cystine bridges form between Cys-27-Cys-141, Cys-45-Cys-51, and Cys-95-Cys-100. Asn-58 carries an N-linked (GlcNAc...) asparagine glycan.

In terms of processing, N-glycosylated. In terms of tissue distribution, hemolymph (at protein level). Constitutively expressed mainly in fat body and also in hemocytes and secreted into hemolymph. Not detected in midgut, epidermis, or Malpighian tubule of naive larvae.

Its subcellular location is the secreted. Its function is as follows. Binds to lipopolysaccharide from a variety of Gram-negative bacteria and to lipid A. This Manduca sexta (Tobacco hawkmoth) protein is MD-2-related lipid-recognition protein.